The primary structure comprises 94 residues: Large ribosomal subunit protein uL23cz (94 aa).

The protein belongs to the universal ribosomal protein uL23 family. Part of the 50S ribosomal subunit.

Its subcellular location is the plastid. It is found in the chloroplast. Binds to 23S rRNA. The protein is Large ribosomal subunit protein uL23cz (rpl23-A) of Agrostis stolonifera (Creeping bentgrass).